Consider the following 173-residue polypeptide: NADH-ubiquinone oxidoreductase chain 6 (173 aa).

Helical transmembrane passes span 1 to 21 (MTYVMSLFLLGLVLGLVAVAS), 25 to 45 (PYFGALSLVGVAAFGCGVLIW), 53 to 73 (LVLFLIYLGGMLVVFAYSAAL), 82 to 102 (LGSWPVVSVYFGYFFFVFGIL), and 142 to 162 (GVLLLGAWVLLLTLLVVLELV).

The protein belongs to the complex I subunit 6 family.

The protein localises to the mitochondrion membrane. The catalysed reaction is a ubiquinone + NADH + 5 H(+)(in) = a ubiquinol + NAD(+) + 4 H(+)(out). Its function is as follows. Core subunit of the mitochondrial membrane respiratory chain NADH dehydrogenase (Complex I) that is believed to belong to the minimal assembly required for catalysis. Complex I functions in the transfer of electrons from NADH to the respiratory chain. The immediate electron acceptor for the enzyme is believed to be ubiquinone. The sequence is that of NADH-ubiquinone oxidoreductase chain 6 (MT-ND6) from Tetraodon nigroviridis (Spotted green pufferfish).